Reading from the N-terminus, the 155-residue chain is Large-conductance mechanosensitive channel (155 aa).

The next 3 membrane-spanning stretches (helical) occupy residues valine 16–leucine 36, valine 40–isoleucine 60, and glycine 88–valine 108.

The protein belongs to the MscL family. In terms of assembly, homopentamer.

It is found in the cell inner membrane. Its function is as follows. Channel that opens in response to stretch forces in the membrane lipid bilayer. May participate in the regulation of osmotic pressure changes within the cell. The sequence is that of Large-conductance mechanosensitive channel from Chlorobium chlorochromatii (strain CaD3).